The following is a 303-amino-acid chain: Oxygen-dependent coproporphyrinogen-III oxidase (303 aa).

Residue serine 93 participates in substrate binding. A divalent metal cation is bound by residues histidine 97 and histidine 107. The active-site Proton donor is histidine 107. Position 109–111 (109–111 (NVR)) interacts with substrate. The a divalent metal cation site is built by histidine 146 and histidine 176. The segment at 241–276 (YVEFNLVYDRGTLFGLQSGGRTESILMSLPPQVRWG) is important for dimerization. 259-261 (GGR) lines the substrate pocket.

It belongs to the aerobic coproporphyrinogen-III oxidase family. As to quaternary structure, homodimer. The cofactor is a divalent metal cation.

Its subcellular location is the cytoplasm. The enzyme catalyses coproporphyrinogen III + O2 + 2 H(+) = protoporphyrinogen IX + 2 CO2 + 2 H2O. The protein operates within porphyrin-containing compound metabolism; protoporphyrin-IX biosynthesis; protoporphyrinogen-IX from coproporphyrinogen-III (O2 route): step 1/1. Functionally, involved in the heme biosynthesis. Catalyzes the aerobic oxidative decarboxylation of propionate groups of rings A and B of coproporphyrinogen-III to yield the vinyl groups in protoporphyrinogen-IX. The sequence is that of Oxygen-dependent coproporphyrinogen-III oxidase from Pseudomonas putida (strain ATCC 47054 / DSM 6125 / CFBP 8728 / NCIMB 11950 / KT2440).